Reading from the N-terminus, the 162-residue chain is MVMLHSKNVKGFLENTLKPYDLHSVDFKTSSLQSSMIITATNGGILSYATSNNDVPKNSINEINSVNNLKMMSLLIKDKWSEDENDTEEQHSNSCYPVEIDSFKTKIYTYEMEDLHTCVAQIPNSDLLLLFIAEGSFPYGLLVIKIERAMRELTDLFGYKLG.

Residues 127 to 144 (LLLLFIAEGSFPYGLLVI) traverse the membrane as a helical segment.

Component of the GSE complex composed of GTR1, GTR2, SLM4, MEH1 and LTV1. Component of the EGO complex, at least composed of GTR2, SLM4 and MEH1.

It is found in the vacuole membrane. Component of the GSE complex, a GTPase complex required for intracellular sorting of GAP1 out of the endosome. Component of the EGO complex, a complex involved in the regulation of microautophagy. This chain is Protein SLM4 (SLM4), found in Saccharomyces cerevisiae (strain ATCC 204508 / S288c) (Baker's yeast).